The primary structure comprises 1333 residues: Partitioning defective 3 homolog (1333 aa).

Ser25 carries the post-translational modification Phosphoserine. Thr91 carries the post-translational modification Phosphothreonine. Residues 143 to 262 (SSDPALTGLS…VGHADTGLEN (120 aa)) are disordered. 2 stretches are compositionally biased toward polar residues: residues 150–163 (GLST…FSSE) and 171–187 (TRWS…TAGS). Phosphoserine is present on residues Ser156 and Ser174. The span at 190-203 (TCDRKKDENYRSLP) shows a compositional bias: basic and acidic residues. Over residues 207-224 (SSWSNQFQRDNARSSLSA) the composition is skewed to polar residues. The PDZ 1 domain maps to 271 to 359 (MVKLVQVPND…ARVIWFHVVP (89 aa)). Disordered stretches follow at residues 369 to 388 (LSQR…DSHC) and 397 to 441 (NAPQ…APPS). At Ser383 the chain carries Phosphoserine. PDZ domains lie at 461-546 (NIQL…LVFR) and 590-677 (EVPL…GMIQ). Tyr489 carries the phosphotyrosine modification. Ser692, Ser695, Ser715, Ser728, Ser806, and Ser824 each carry phosphoserine. Interaction with PRKCI and PRKCZ regions lie at residues 712–932 (RRIS…YDKP) and 712–936 (RRIS…MVDD). Lys831 is modified (N6-acetyllysine). The residue at position 834 (Ser834) is a Phosphoserine. Lys848 is subject to N6-acetyllysine. A phosphoserine mark is found at Ser849 and Ser869. Disordered regions lie at residues 861–884 (TVDD…KKSS), 928–1011 (SYDK…AKKG), 1024–1071 (KHRK…ERQA), 1110–1267 (PQSP…LGGH), and 1283–1333 (QEQR…PFYS). Lys881 bears the N6-acetyllysine mark. Residues 931 to 1333 (KPMVDDDDEG…TPEKGRPFYS (403 aa)) form an interaction with FRMD4A region. The segment covering 935–949 (DDDDEGMETLEEDTE) has biased composition (acidic residues). Residue Ser958 is modified to Phosphoserine; by AURKA. 2 positions are modified to phosphoserine: Ser967 and Ser969. 2 stretches are compositionally biased toward basic and acidic residues: residues 977-1005 (DPEK…EKDK) and 1026-1039 (RKDD…RIKI). Ser1042 bears the Phosphoserine mark. Residues 1046 to 1071 (EEDRVRMKEEQERIQAKTREFRERQA) are compositionally biased toward basic and acidic residues. Residues 1046 to 1078 (EEDRVRMKEEQERIQAKTREFRERQARERDYAE) are a coiled coil. The span at 1134-1143 (PGDSNRSTPS) shows a compositional bias: polar residues. The span at 1144–1171 (NHDRIQRLRQEFQQAKQDEDVEDRRRTY) shows a compositional bias: basic and acidic residues. 3 coiled-coil regions span residues 1145-1168 (HDRI…EDRR), 1195-1218 (VQVQ…YSSL), and 1274-1295 (MLET…LKKQ). Residues 1176–1199 (SWSSSRPASQSGRHSVSVEVQVQR) are compositionally biased toward low complexity. A compositionally biased stretch (polar residues) spans 1215–1236 (YSSLPRQSRKNASSISQDSWEQ). Basic and acidic residues predominate over residues 1283 to 1292 (QEQRRKEQQL). The span at 1314-1323 (SQVARLNRLQ) shows a compositional bias: polar residues. A compositionally biased stretch (basic and acidic residues) spans 1324 to 1333 (TPEKGRPFYS). Lys1327 bears the N6-acetyllysine mark.

The protein belongs to the PAR3 family. Interacts with PRCKI and CDH5. Interacts (via PDZ 3 domain) with PTEN (via C-terminus). Component of a complex whose core is composed of ARHGAP17, AMOT, PALS1, PATJ and PARD3/PAR3. Interacts with LIMK2, AURKA and AURKB. Component of the Par polarity complex, composed of at least phosphorylated PRKCZ, PARD3 and TIAM1. Interacts with ECT2 and FBF1. Interacts (via PDZ 1 domain) with F11R/JAM1, PARD6A and PARD6B. Part of a complex with PARD6A or PARD6B, PRKCI or PRKCZ and CDC42 or RAC1. Directly interacts with TIAM1 and TIAM2. Interacts with SIRT2. Interacts (via coiled-coil domain) with FRMD4A. Found in a complex with PARD3, CYTH1 and FRMD4A. Interacts with SAPCD2. Interacts with PRKCA. As to quaternary structure, interacts with PRKCZ. Acetylated. Deacetylated by SIRT2, thereby inhibiting Schwann cell peripheral myelination. In terms of processing, phosphorylation at Ser-824 by PRKCZ and PRKCI occurs at the most apical tip of epithelial cell-cell contacts during the initial phase of tight junction formation and may promote dissociation of the complex with PARD6. EGF-induced Tyr-1123 phosphorylation mediates dissociation from LIMK2. Phosphorylation by AURKA at Ser-958 is required for the normal establishment of neuronal polarity. Isoform 4 and isoform 5 are phosphorylated during oocyte maturation. All isoforms are expressed in heart, while expression in brain is mainly limited to isoform 1, and to isoform 3 to a weaker level.

The protein localises to the cytoplasm. It localises to the endomembrane system. The protein resides in the cell junction. Its subcellular location is the tight junction. It is found in the adherens junction. The protein localises to the cell cortex. It localises to the cytoskeleton. The protein resides in the cell membrane. Adapter protein involved in asymmetrical cell division and cell polarization processes. Seems to play a central role in the formation of epithelial tight junctions. Targets the phosphatase PTEN to cell junctions. Association with PARD6B may prevent the interaction of PARD3 with F11R/JAM1, thereby preventing tight junction assembly. The PARD6-PARD3 complex links GTP-bound Rho small GTPases to atypical protein kinase C proteins. Required for establishment of neuronal polarity and normal axon formation in cultured hippocampal neurons. Involved in Schwann cell peripheral myelination. The sequence is that of Partitioning defective 3 homolog (Pard3) from Mus musculus (Mouse).